A 225-amino-acid polypeptide reads, in one-letter code: Uracil-DNA glycosylase (225 aa).

Asp-65 functions as the Proton acceptor in the catalytic mechanism.

The protein belongs to the uracil-DNA glycosylase (UDG) superfamily. UNG family.

Its subcellular location is the cytoplasm. The catalysed reaction is Hydrolyzes single-stranded DNA or mismatched double-stranded DNA and polynucleotides, releasing free uracil.. Its function is as follows. Excises uracil residues from the DNA which can arise as a result of misincorporation of dUMP residues by DNA polymerase or due to deamination of cytosine. This Alkaliphilus oremlandii (strain OhILAs) (Clostridium oremlandii (strain OhILAs)) protein is Uracil-DNA glycosylase.